Here is a 519-residue protein sequence, read N- to C-terminus: MQSLWIYPEDTEVLGAACKSLLKALKPRYQKIALFSPISGGCEGFGECESLSSLEVHSAIDKQKALELVSTAQEELLFETILKRYDELQSTHDFVINLGYAPKFFLNALLDLNTILAKHLNAPVVAVAQTSLDHLKAMHSHILKKEAPFAIGLFVGETLEKPHFLSASLCKQQCELEASAIENLLQTKSEIITPLAFQRSLEKKAKKQIKKVVLPESEDERILKAAHRLNLMGAVGLILLGDKEAINSQAKNLNLNLENVEIINPNTSHYREEFAKSLYELRKSKGLSEQEAERLALDKTYFATMLVHLGYAHAMVSGVNHTTAETIRPALQIIKTKPGVSLVSSVFLMCLDTQVFVFGDCAIIPNPSPKELAEIATTSAQTAKQFNIAPKVALLSYATGNSAQGEMIDKINEALTIVQKLDPQLEIDGPLQFDASIDKGVAKKKMPNSQVAGQASVFIFPDLNAGNIAYKAVQRSAKAVAIGPILQGLNKPINDLSRGALVEDIVNTVLISAIQAQDY.

The interval 196–519 (AFQRSLEKKA…LISAIQAQDY (324 aa)) is phosphate acetyltransferase.

It in the N-terminal section; belongs to the CobB/CobQ family. In the C-terminal section; belongs to the phosphate acetyltransferase and butyryltransferase family.

Its subcellular location is the cytoplasm. It carries out the reaction acetyl-CoA + phosphate = acetyl phosphate + CoA. It functions in the pathway metabolic intermediate biosynthesis; acetyl-CoA biosynthesis; acetyl-CoA from acetate: step 2/2. In Helicobacter pylori (strain J99 / ATCC 700824) (Campylobacter pylori J99), this protein is Phosphate acetyltransferase (pta).